We begin with the raw amino-acid sequence, 255 residues long: Anamorsin homolog (255 aa).

Positions 1–163 are N-terminal SAM-like domain; that stretch reads MPKETLVVSK…VRPNWKSKTD (163 aa). Positions 164–185 are linker; sequence KKSPSMIDAAPIDGYISKAPDY. [2Fe-2S] cluster contacts are provided by Cys188, Cys195, Cys198, and Cys200. The segment at 188-200 is fe-S binding site A; it reads CSTKPRACANCTC. [4Fe-4S] cluster contacts are provided by Cys224, Cys227, Cys235, and Cys238. 2 consecutive short sequence motifs (cx2C motif) follow at residues 224 to 227 and 235 to 238; these read CGNC and CESC. The tract at residues 224–238 is fe-S binding site B; it reads CGNCYLGDAFRCESC.

Belongs to the anamorsin family. Monomer. The cofactor is [2Fe-2S] cluster. It depends on [4Fe-4S] cluster as a cofactor.

The protein localises to the cytoplasm. It is found in the mitochondrion intermembrane space. Component of the cytosolic iron-sulfur (Fe-S) protein assembly (CIA) machinery. Required for the maturation of extramitochondrial Fe-S proteins. Part of an electron transfer chain functioning in an early step of cytosolic Fe-S biogenesis, facilitating the de novo assembly of a [4Fe-4S] cluster on the cytosolic Fe-S scaffold complex. Electrons are transferred from NADPH via a FAD- and FMN-containing diflavin oxidoreductase. Together with the diflavin oxidoreductase, also required for the assembly of the diferric tyrosyl radical cofactor of ribonucleotide reductase (RNR), probably by providing electrons for reduction during radical cofactor maturation in the catalytic small subunit. In Theileria annulata, this protein is Anamorsin homolog.